The chain runs to 75 residues: Metallothionein-like protein 1 (75 aa).

The protein belongs to the metallothionein superfamily. Type 15 family.

Functionally, metallothioneins have a high content of cysteine residues that bind various heavy metals. The chain is Metallothionein-like protein 1 (ALI1) from Triticum aestivum (Wheat).